The following is a 210-amino-acid chain: MHKHSATADMLPISAFSPLKFLGGVVATPQGPVLWDATTTPVPFQAFPCPPAITPINQFVNYQPAPAMDKIWRPAFEDYRGVTMRPALPEVPETSLRPALQELPEPSSPQSQSSVDDDTDSKEDVTETLECAQALTDLKWGTVDPPRSTSPVTASTSSGVSSDLQKAKEQAIRRYRLIEAKDLGKLVVRGPKKDKRDPDFYIKKVPLHFS.

Residues 101–114 are compositionally biased toward low complexity; that stretch reads QELPEPSSPQSQSS. The tract at residues 101–166 is disordered; sequence QELPEPSSPQ…SSGVSSDLQK (66 aa). The segment covering 147-164 has biased composition (polar residues); it reads RSTSPVTASTSSGVSSDL.

This is an uncharacterized protein from Alcelaphine herpesvirus 1 (strain C500) (AlHV-1).